Consider the following 307-residue polypeptide: Leucine-rich repeat-containing protein 59 (307 aa).

Methionine 1 carries the N-acetylmethionine modification. An N-acetylthreonine; in Leucine-rich repeat-containing protein 59, N-terminally processed modification is found at threonine 2. Residues 2 to 244 (TKTGSKGGNL…KPPPRKHNRS (243 aa)) lie on the Cytoplasmic side of the membrane. LRR repeat units follow at residues 10 to 31 (NLRDKLDGNELDLSLSDLNEVP), 40 to 62 (KATVLDLSCNKLSTLPSDFCGLT), 63 to 84 (HLVKLDLSKNKLQQLPADFGRL), 86 to 107 (NLQHLDLLNNRLVTLPVSFAQL), and 109 to 128 (NLKWLDLKDNPLDPVLAKVA). Serine 23 and serine 25 each carry phosphoserine. Lysine 73 is modified (N6-succinyllysine). Lysine 135 carries the N6-acetyllysine modification. Positions 148–216 (MKAVQADQER…KASKREQEKK (69 aa)) form a coiled coil. The tract at residues 150-242 (AVQADQERER…PRKPPPRKHN (93 aa)) is disordered. The segment covering 154–221 (DQERERQRRL…EQEKKPKKET (68 aa)) has biased composition (basic and acidic residues). Basic residues predominate over residues 229–242 (SGSRPRKPPPRKHN). The helical transmembrane segment at 245-265 (WAVLKGLLLLLLLCVAGGLVV) threads the bilayer. Residues 266–307 (CRVTGLQQQPLCTSVNAIYDNAVQGLRHHEILQWVLQTDSQQ) are Lumenal-facing.

Can form homodimers. Interacts with SGO1. Interacts with FGF1.

It localises to the microsome membrane. The protein resides in the endoplasmic reticulum membrane. The protein localises to the nucleus envelope. Functionally, required for nuclear import of FGF1, but not that of FGF2. Might regulate nuclear import of exogenous FGF1 by facilitating interaction with the nuclear import machinery and by transporting cytosolic FGF1 to, and possibly through, the nuclear pores. This Rattus norvegicus (Rat) protein is Leucine-rich repeat-containing protein 59 (Lrrc59).